The chain runs to 340 residues: Phenylalanine--tRNA ligase alpha subunit (340 aa).

Position 255 (glutamate 255) interacts with Mg(2+).

Belongs to the class-II aminoacyl-tRNA synthetase family. Phe-tRNA synthetase alpha subunit type 1 subfamily. As to quaternary structure, tetramer of two alpha and two beta subunits. The cofactor is Mg(2+).

Its subcellular location is the cytoplasm. The enzyme catalyses tRNA(Phe) + L-phenylalanine + ATP = L-phenylalanyl-tRNA(Phe) + AMP + diphosphate + H(+). In Moorella thermoacetica (strain ATCC 39073 / JCM 9320), this protein is Phenylalanine--tRNA ligase alpha subunit.